The following is a 630-amino-acid chain: Sodium-dependent serotonin transporter (630 aa).

At 1–87 (METTALNSQK…ERETWGKKVD (87 aa)) the chain is on the cytoplasmic side. The residue at position 47 (Tyr47) is a Phosphotyrosine. A helical membrane pass occupies residues 88 to 112 (FLLSVIGYAVDLGNIWRFPYVCYQN). 5 residues coordinate Na(+): Gly94, Ala96, Val97, Asp98, and Asn101. A serotonin-binding site is contributed by Asp98. The Extracellular portion of the chain corresponds to 113 to 115 (GGG). A helical transmembrane segment spans residues 116-135 (AFLLPYIIMAIFGGIPLFYM). Residues 136–160 (ELALGQYHRNGCISIWRKICPIFKG) are Cytoplasmic-facing. Tyr142 carries the phosphotyrosine modification. The helical transmembrane segment at 161–186 (IGYTICIIAFYIASYYNTIIAWALYY) threads the bilayer. Residues 187–252 (LISSFTDRLP…KGLQDVGGVS (66 aa)) lie on the Extracellular side of the membrane. Cys200 and Cys209 are joined by a disulfide. Residues Asn208 and Asn217 are each glycosylated (N-linked (GlcNAc...) asparagine). The chain crosses the membrane as a helical span at residues 253–271 (WQLTLCIMLIFTIIYFSIW). The Cytoplasmic portion of the chain corresponds to 272 to 277 (KGVKTS). Thr276 carries the post-translational modification Phosphothreonine. Residues 278-297 (GKVVWVTATFPYIVLSVLLV) form a helical membrane-spanning segment. Residues 298-324 (RGATLPGAWKGVLFYLKPNWQKLLETG) are Extracellular-facing. The helical transmembrane segment at 325 to 347 (VWIDAAAQIFFSLGPGFGVLLAF) threads the bilayer. Residue Ser336 coordinates Na(+). Residues 348–360 (ASYNKFNNNCYQD) lie on the Cytoplasmic side of the membrane. The helical transmembrane segment at 361-380 (ALVTSAVNCMTSFVSGFVIF) threads the bilayer. A Na(+)-binding site is contributed by Asn368. Topologically, residues 381-421 (TVLGYMAEMRSEDVSEVAKDAGPSLLFITYAEAIANMPAST) are extracellular. A helical membrane pass occupies residues 422–443 (FFAIIFFLMLITLGLDSTFAGL). Na(+) is bound by residues Leu434, Asp437, and Ser438. Thr439 is a serotonin binding site. At 444-463 (EGVITAVLDEFPHIWAKHRE) the chain is on the cytoplasmic side. A helical membrane pass occupies residues 464–483 (WFVLAVVITCFFGSLTTLTF). Over 484–494 (GGAYVVKLLEE) the chain is Extracellular. Serotonin-binding residues include Glu494 and Tyr495. A helical transmembrane segment spans residues 495–516 (YATGPAVLTVVFIEAIAVSWFY). Residues 517-538 (GVTQFCSDVKEMLGFSPGWFWR) are Cytoplasmic-facing. A helical transmembrane segment spans residues 539–558 (ICWVAVSPVFLLFIICSFLM). 2 residues coordinate serotonin: Phe556 and Ser559. Topologically, residues 559–574 (SPPQLRLFQYSYPHWS) are extracellular. Residues 575–595 (VILGYCIGTSSVICIPTYITY) traverse the membrane as a helical segment. Residues 596–630 (RLVTTPGTLKERIIKSITPETPTEIPCGDICLNAV) are Cytoplasmic-facing. An interaction with RAB4A region spans residues 616 to 624 (TPTEIPCGD).

The protein belongs to the sodium:neurotransmitter symporter (SNF) (TC 2.A.22) family. SLC6A4 subfamily. As to quaternary structure, monomer or homooligomer. Interacts (via C-terminus) with SCAMP2; the interaction is direct and retains transporter molecules intracellularly. Interacts with filamentous actin and STX1A. Interacts (via the N-terminus) with STX1A (via the H3 domain); this interaction regulates SLC4A6 channel conductance. Interacts with SEC23A, SEC24C and PATJ. Interacts with NOS1; the interaction may diminish the cell surface localization of SERT in the brain and, correspondingly, reduce serotonin reuptake. Interacts with TGFB1I1. Interacts with ITGAV:ITGB3. Interacts (via C-terminus) with ITGB3; this interaction regulates SLC6A4 trafficking. Phosphorylation at Thr-276 increases 5-HT uptake and is required for cGMP-mediated SERT regulation. Expressed in the intestinal crypt epithelial cells (at protein level).

It is found in the cell membrane. The protein resides in the endomembrane system. Its subcellular location is the endosome membrane. The protein localises to the synapse. It localises to the cell junction. It is found in the focal adhesion. The protein resides in the cell projection. Its subcellular location is the neuron projection. The catalysed reaction is serotonin(out) + K(+)(in) + Na(+)(out) + H(+)(in) = serotonin(in) + K(+)(out) + Na(+)(in) + H(+)(out). In terms of biological role, serotonin transporter that cotransports serotonin with one Na(+) ion in exchange for one K(+) ion and possibly one proton in an overall electroneutral transport cycle. Transports serotonin across the plasma membrane from the extracellular compartment to the cytosol thus limiting serotonin intercellular signaling. Essential for serotonin homeostasis in the central nervous system. In the developing somatosensory cortex, acts in glutamatergic neurons to control serotonin uptake and its trophic functions accounting for proper spatial organization of cortical neurons and elaboration of sensory circuits. In the mature cortex, acts primarily in brainstem raphe neurons to mediate serotonin uptake from the synaptic cleft back into the pre-synaptic terminal thus terminating serotonin signaling at the synapse. Modulates mucosal serotonin levels in the gastrointestinal tract through uptake and clearance of serotonin in enterocytes. Required for enteric neurogenesis and gastrointestinal reflexes. Regulates blood serotonin levels by ensuring rapid high affinity uptake of serotonin from plasma to platelets, where it is further stored in dense granules via vesicular monoamine transporters and then released upon stimulation. Mechanistically, the transport cycle starts with an outward-open conformation having Na1(+) and Cl(-) sites occupied. The binding of a second extracellular Na2(+) ion and serotonin substrate leads to structural changes to outward-occluded to inward-occluded to inward-open, where the Na2(+) ion and serotonin are released into the cytosol. Binding of intracellular K(+) ion induces conformational transitions to inward-occluded to outward-open and completes the cycle by releasing K(+) possibly together with a proton bound to Asp-98 into the extracellular compartment. Na1(+) and Cl(-) ions remain bound throughout the transport cycle. Additionally, displays serotonin-induced channel-like conductance for monovalent cations, mainly Na(+) ions. The channel activity is uncoupled from the transport cycle and may contribute to the membrane resting potential or excitability. This Cavia porcellus (Guinea pig) protein is Sodium-dependent serotonin transporter (SLC6A4).